Reading from the N-terminus, the 385-residue chain is Lipid-A-disaccharide synthase 2 (385 aa).

This sequence belongs to the LpxB family.

It carries out the reaction a lipid X + a UDP-2-N,3-O-bis[(3R)-3-hydroxyacyl]-alpha-D-glucosamine = a lipid A disaccharide + UDP + H(+). The protein operates within bacterial outer membrane biogenesis; LPS lipid A biosynthesis. Functionally, condensation of UDP-2,3-diacylglucosamine and 2,3-diacylglucosamine-1-phosphate to form lipid A disaccharide, a precursor of lipid A, a phosphorylated glycolipid that anchors the lipopolysaccharide to the outer membrane of the cell. The sequence is that of Lipid-A-disaccharide synthase 2 from Legionella pneumophila (strain Lens).